The sequence spans 359 residues: Fe-S cluster assembly protein DRE2 (359 aa).

An N-terminal SAM-like domain region spans residues 1-148 (MASTGRVLLL…KPDVAAQQAV (148 aa)). Disordered regions lie at residues 97-116 (NKAW…NDND) and 149-210 (PLKL…PSGV). Positions 149–246 (PLKLGRRKKE…EDELLGEDDM (98 aa)) are linker. Positions 152-164 (LGRRKKEKERRHP) are enriched in basic residues. The segment covering 167 to 183 (NDVTNGKVNAPSSNGVN) has biased composition (polar residues). Residues 184 to 200 (ASTSTATATATTTTTTT) are compositionally biased toward low complexity. [2Fe-2S] cluster is bound by residues cysteine 256, cysteine 267, cysteine 270, and cysteine 272. The segment at 256–272 (CRPKPGKRRRACKDCSC) is fe-S binding site A. 4 residues coordinate [4Fe-4S] cluster: cysteine 322, cysteine 325, cysteine 333, and cysteine 336. Short sequence motifs (cx2C motif) lie at residues 322–325 (CGNC) and 333–336 (CDGC). The segment at 322-336 (CGNCSLGDAFRCDGC) is fe-S binding site B.

It belongs to the anamorsin family. In terms of assembly, monomer. Interacts with TAH18. Interacts with MIA40. It depends on [2Fe-2S] cluster as a cofactor. Requires [4Fe-4S] cluster as cofactor.

The protein resides in the cytoplasm. It is found in the mitochondrion intermembrane space. Component of the cytosolic iron-sulfur (Fe-S) protein assembly (CIA) machinery required for the maturation of extramitochondrial Fe-S proteins. Part of an electron transfer chain functioning in an early step of cytosolic Fe-S biogenesis, facilitating the de novo assembly of a [4Fe-4S] cluster on the scaffold complex CFD1-NBP35. Electrons are transferred to DRE2 from NADPH via the FAD- and FMN-containing protein TAH18. TAH18-DRE2 are also required for the assembly of the diferric tyrosyl radical cofactor of ribonucleotide reductase (RNR), probably by providing electrons for reduction during radical cofactor maturation in the catalytic small subunit RNR2. The chain is Fe-S cluster assembly protein DRE2 from Blastomyces gilchristii (strain SLH14081) (Blastomyces dermatitidis).